Consider the following 515-residue polypeptide: Hyccin (515 aa).

Positions serine 358–lysine 378 are enriched in low complexity. Disordered regions lie at residues serine 358–alanine 410 and threonine 491–aspartate 515. Residues alanine 389–serine 403 are compositionally biased toward basic and acidic residues. Residues lysine 498 to aspartate 515 show a composition bias toward polar residues.

Belongs to the Hyccin family. As to quaternary structure, component of a phosphatidylinositol 4-kinase (PI4K) complex.

It is found in the cytoplasm. The protein resides in the cytosol. Its subcellular location is the cell membrane. Its function is as follows. Component of a complex required to localize phosphatidylinositol 4-kinase (PI4K) to the plasma membrane. The complex acts as a regulator of phosphatidylinositol 4-phosphate (PtdIns(4)P) synthesis. This Gallus gallus (Chicken) protein is Hyccin (HYCC1).